We begin with the raw amino-acid sequence, 546 residues long: Probable zinc metalloprotease EGY2, chloroplastic (546 aa).

The transit peptide at 1–64 (MQLPAMSCSP…QIRNRRFVCQ (64 aa)) directs the protein to the chloroplast. The segment at 67-143 (TETEPDGDGN…DATPASDAQE (77 aa)) is disordered. The segment covering 69-86 (TEPDGDGNGDEEKEELGD) has biased composition (acidic residues). Polar residues-rich tracts occupy residues 89–110 (SSPS…TNAD) and 118–130 (NTEP…TVQN). The next 7 helical transmembrane spans lie at 257–277 (AVPE…TLLL), 301–321 (VYGA…HILA), 326–346 (GIKL…FGAI), 364–384 (AAGP…GFIL), 427–447 (PLVL…IPAG), 474–494 (LLGI…LIFF), and 514–534 (YISI…PYPF).

This sequence belongs to the peptidase M50B family.

The protein resides in the plastid. The protein localises to the chloroplast membrane. Its function is as follows. Probable membrane-associated metalloprotease that may be involved in chloroplast development. This is Probable zinc metalloprotease EGY2, chloroplastic (EGY2) from Oryza sativa subsp. japonica (Rice).